The chain runs to 487 residues: MNEMSKSEITDKKKRYAAGVLKYAQMGYWDGDYQPKDTDILALFRITPQDGVDPIEAAAAVAGESSTATWTVVWTDRLTACDQYRAKAYKVEPVPGQEGQYFCYVAYDLILFEEGSIANVTASIIGNVFSFKPLLAARLEDMRFPVAYMKTFAGPPTGIVVERERLDKFGRPLLGATTKPKLGLSGKNYGRVVYEGLKGGLDFMKDDENINSQPFMHWRDRFLYCMEAVNKATAVTGEVKGHYLNITAGTMEEMYRRAELAKELGSVIVMVDLIVGWTAIQSISNWCRQNDMILHMHRAGHGTYTRQKNHGISFRVIAKWLRMAGVDHLHCGTAVGKLEGDPLTVQGYYNTCREMVNEVDLPRGIFFEQDWGNLKKVMPVASGGIHAGQMHQLLDLFGDDVVLQFGGGTIGHPMGIQAGATANRVALEAMVLARNEGVDLKTEGPEVLRRAAKWCKPLEAALDVWGNITFNYTSTDTSDFVPTASVS.

2 residues coordinate substrate: N127 and T177. The active-site Proton acceptor is K179. K181 is a binding site for substrate. Residues K205, D207, and E208 each coordinate Mg(2+). Residue K205 is modified to N6-carboxylysine. The Proton acceptor role is filled by H297. The substrate site is built by R298, H330, and S382.

This sequence belongs to the RuBisCO large chain family. Type I subfamily. In terms of assembly, heterohexadecamer of 8 large chains and 8 small chains. The cofactor is Mg(2+).

It carries out the reaction 2 (2R)-3-phosphoglycerate + 2 H(+) = D-ribulose 1,5-bisphosphate + CO2 + H2O. It catalyses the reaction D-ribulose 1,5-bisphosphate + O2 = 2-phosphoglycolate + (2R)-3-phosphoglycerate + 2 H(+). Functionally, ruBisCO catalyzes two reactions: the carboxylation of D-ribulose 1,5-bisphosphate, the primary event in carbon dioxide fixation, as well as the oxidative fragmentation of the pentose substrate. Both reactions occur simultaneously and in competition at the same active site. This chain is Ribulose bisphosphate carboxylase large chain, found in Paracoccus denitrificans (strain Pd 1222).